Reading from the N-terminus, the 234-residue chain is Peptidyl-prolyl cis-trans isomerase, rhodopsin-specific isozyme (234 aa).

Positions 1–19 (MNILKILILLELIYTCVSG) are cleaved as a signal peptide. Residues 29-187 (YMDVKHQKKP…DPVIIVNCGE (159 aa)) form the PPIase cyclophilin-type domain. N-linked (GlcNAc...) asparagine glycosylation is present at asparagine 67. A helical transmembrane segment spans residues 202–222 (ILGWIKAAGLPFCSSFIVLMI).

The protein belongs to the cyclophilin-type PPIase family. Expressed specifically in photoreceptor cells.

The protein resides in the membrane. The catalysed reaction is [protein]-peptidylproline (omega=180) = [protein]-peptidylproline (omega=0). Its function is as follows. PPIases accelerate the folding of proteins. It catalyzes the cis-trans isomerization of proline imidic peptide bonds in oligopeptides. Acts on the folding of rhodopsin RH1 and RH2 (but not RH3) and is required for visual transduction. This is Peptidyl-prolyl cis-trans isomerase, rhodopsin-specific isozyme (NINAA) from Calliphora vicina (Blue blowfly).